Here is a 181-residue protein sequence, read N- to C-terminus: Der GTPase-activating protein YihI (181 aa).

A disordered region spans residues 1–73 (MSRIKKARKP…DPRIGSKKPI (73 aa)). The span at 22-32 (NRTDRDVESRE) shows a compositional bias: basic and acidic residues. The segment covering 33 to 42 (IKRKRKRKGL) has biased composition (basic residues). The span at 55–67 (QARRNAQKKDPRI) shows a compositional bias: basic and acidic residues.

This sequence belongs to the YihI family. As to quaternary structure, interacts with Der.

Functionally, a GTPase-activating protein (GAP) that modifies Der/EngA GTPase function. May play a role in ribosome biogenesis. This Aliivibrio fischeri (strain ATCC 700601 / ES114) (Vibrio fischeri) protein is Der GTPase-activating protein YihI.